Consider the following 52-residue polypeptide: uncharacterized protein (52 aa).

A helical transmembrane segment spans residues 21-40 (VAMNSYVELLFLSVPLIHIF).

It is found in the cell membrane. This is an uncharacterized protein from Bacillus subtilis (strain 168).